Consider the following 526-residue polypeptide: Tyrosine-protein kinase transforming protein Src (526 aa).

The segment at 1–52 (MGSSKSKPKDPSQRRRSLEPPDSTHHGGFPASQTPDETAAPDAHRNPSRSFG) is disordered. Glycine 2 carries N-myristoyl glycine; by host lipidation. Residues 7-25 (KPKDPSQRRRSLEPPDSTH) show a composition bias toward basic and acidic residues. Residues 81-142 (GGVTTFVALY…PSNYVAPSDS (62 aa)) form the SH3 domain. The SH2 domain maps to 148-245 (WYFGKITRRE…GLCHRLTNVC (98 aa)). Positions 267–517 (LRLEAKLGQG…TFKYLQAQLL (251 aa)) constitute a Protein kinase domain. ATP contacts are provided by residues 273–281 (LGQGCFGEV) and lysine 295. The Proton acceptor role is filled by aspartate 386. Tyrosine 416 bears the Phosphotyrosine; by autocatalysis mark.

This sequence belongs to the protein kinase superfamily. Tyr protein kinase family. SRC subfamily. Mn(2+) is required as a cofactor. Post-translationally, the phosphorylated form is termed pp60v-src.

The catalysed reaction is L-tyrosyl-[protein] + ATP = O-phospho-L-tyrosyl-[protein] + ADP + H(+). In terms of biological role, this phosphoprotein, required for both the initiation and the maintenance of neoplastic transformation, is a protein kinase that catalyzes the phosphorylation of tyrosine residues in vitro. The sequence is that of Tyrosine-protein kinase transforming protein Src (V-SRC) from Gallus gallus (Chicken).